A 649-amino-acid chain; its full sequence is Glycerol-3-phosphate dehydrogenase, mitochondrial (649 aa).

69 to 97 (DVLIIGGGATGTGCALDAATRGLNVALVE) contacts FAD.

Belongs to the FAD-dependent glycerol-3-phosphate dehydrogenase family. It depends on FAD as a cofactor.

It is found in the mitochondrion inner membrane. The protein localises to the mitochondrion intermembrane space. It catalyses the reaction a quinone + sn-glycerol 3-phosphate = dihydroxyacetone phosphate + a quinol. It participates in polyol metabolism; glycerol degradation via glycerol kinase pathway; glycerone phosphate from sn-glycerol 3-phosphate (anaerobic route): step 1/1. This chain is Glycerol-3-phosphate dehydrogenase, mitochondrial (GUT2), found in Saccharomyces cerevisiae (strain ATCC 204508 / S288c) (Baker's yeast).